A 247-amino-acid polypeptide reads, in one-letter code: MFRFMRDVEPEDPMFLMDPFAIHRQHMSRMLSGGFGYSPFLSITDGNMPATRPASRRMQAGAVSPFGMLGMSGGFMDMFGMMNDMIGNMEHMAAGGNCQTFSSSTVISYSNTGDGAPKVYQETSEMRSAPGGIRETRRTVRDSDSGLEQMSIGHHIRDRAHILQRSRNHRTGDQEERQDYINLDESEAAAFDDEWRRETSRYRQQRPLEFRRHEASVGGGRRAEGPPRLAIQGPEDSPSRQSRRYDW.

The tract at residues 122-247 (ETSEMRSAPG…PSRQSRRYDW (126 aa)) is disordered. The span at 134-144 (RETRRTVRDSD) shows a compositional bias: basic and acidic residues. Basic residues predominate over residues 154-169 (HHIRDRAHILQRSRNH). The span at 170–179 (RTGDQEERQD) shows a compositional bias: basic and acidic residues. Residues 182–192 (NLDESEAAAFD) show a composition bias toward acidic residues. Residues 193–225 (DEWRRETSRYRQQRPLEFRRHEASVGGGRRAEG) show a composition bias toward basic and acidic residues. 3 positions are modified to phosphoserine: Ser-216, Ser-237, and Ser-239.

The protein belongs to the MLF family.

The protein resides in the cytoplasm. Its subcellular location is the nucleus. This chain is Myeloid leukemia factor 2 (Mlf2), found in Mus musculus (Mouse).